Reading from the N-terminus, the 226-residue chain is Deoxyribose-phosphate aldolase (226 aa).

The Proton donor/acceptor role is filled by Asp-84. The active-site Schiff-base intermediate with acetaldehyde is the Lys-146. Lys-188 functions as the Proton donor/acceptor in the catalytic mechanism.

The protein belongs to the DeoC/FbaB aldolase family. DeoC type 1 subfamily. Homodimer.

It localises to the cytoplasm. It carries out the reaction 2-deoxy-D-ribose 5-phosphate = D-glyceraldehyde 3-phosphate + acetaldehyde. The protein operates within carbohydrate degradation; 2-deoxy-D-ribose 1-phosphate degradation; D-glyceraldehyde 3-phosphate and acetaldehyde from 2-deoxy-alpha-D-ribose 1-phosphate: step 2/2. Catalyzes a reversible aldol reaction between acetaldehyde and D-glyceraldehyde 3-phosphate to generate 2-deoxy-D-ribose 5-phosphate. This is Deoxyribose-phosphate aldolase from Pyrobaculum aerophilum (strain ATCC 51768 / DSM 7523 / JCM 9630 / CIP 104966 / NBRC 100827 / IM2).